The chain runs to 347 residues: DNA-directed RNA polymerase subunit alpha (347 aa).

Positions 1 to 243 (MLIKQGERLI…DQISVFINFD (243 aa)) are alpha N-terminal domain (alpha-NTD). Residues 260–347 (VNEHLFKSID…EWKRKQQNEA (88 aa)) form an alpha C-terminal domain (alpha-CTD) region.

This sequence belongs to the RNA polymerase alpha chain family. As to quaternary structure, homodimer. The RNAP catalytic core consists of 2 alpha, 1 beta, 1 beta' and 1 omega subunit. When a sigma factor is associated with the core the holoenzyme is formed, which can initiate transcription.

It carries out the reaction RNA(n) + a ribonucleoside 5'-triphosphate = RNA(n+1) + diphosphate. Its function is as follows. DNA-dependent RNA polymerase catalyzes the transcription of DNA into RNA using the four ribonucleoside triphosphates as substrates. This chain is DNA-directed RNA polymerase subunit alpha, found in Desulfovibrio desulfuricans (strain ATCC 27774 / DSM 6949 / MB).